We begin with the raw amino-acid sequence, 299 residues long: Protoheme IX farnesyltransferase (299 aa).

9 consecutive transmembrane segments (helical) span residues 29–49 (VVTL…PGAV), 51–71 (LQPL…AAAM), 100–120 (HAAT…YWLV), 123–143 (LTAW…TAYL), 150–170 (NIVI…TAVT), 177–197 (GLLL…ALAI), 223–243 (CIFL…LVGM), 244–264 (SGAL…YKAW), and 275–295 (AMDV…LLLV).

The protein belongs to the UbiA prenyltransferase family. Protoheme IX farnesyltransferase subfamily.

It is found in the cell inner membrane. The enzyme catalyses heme b + (2E,6E)-farnesyl diphosphate + H2O = Fe(II)-heme o + diphosphate. The protein operates within porphyrin-containing compound metabolism; heme O biosynthesis; heme O from protoheme: step 1/1. Its function is as follows. Converts heme B (protoheme IX) to heme O by substitution of the vinyl group on carbon 2 of heme B porphyrin ring with a hydroxyethyl farnesyl side group. The protein is Protoheme IX farnesyltransferase of Shewanella amazonensis (strain ATCC BAA-1098 / SB2B).